A 124-amino-acid chain; its full sequence is Large ribosomal subunit protein bL19 (124 aa).

This sequence belongs to the bacterial ribosomal protein bL19 family.

This protein is located at the 30S-50S ribosomal subunit interface and may play a role in the structure and function of the aminoacyl-tRNA binding site. In Orientia tsutsugamushi (strain Boryong) (Rickettsia tsutsugamushi), this protein is Large ribosomal subunit protein bL19.